A 158-amino-acid polypeptide reads, in one-letter code: Pathogenesis-related protein 1 (158 aa).

It belongs to the BetVI family.

The protein resides in the cytoplasm. The protein is Pathogenesis-related protein 1 (PR1) of Asparagus officinalis (Garden asparagus).